Here is a 134-residue protein sequence, read N- to C-terminus: Small ribosomal subunit protein uS11 (134 aa).

This sequence belongs to the universal ribosomal protein uS11 family. Part of the 30S ribosomal subunit. Interacts with proteins S7 and S18. Binds to IF-3.

In terms of biological role, located on the platform of the 30S subunit, it bridges several disparate RNA helices of the 16S rRNA. Forms part of the Shine-Dalgarno cleft in the 70S ribosome. In Salinibacter ruber (strain DSM 13855 / M31), this protein is Small ribosomal subunit protein uS11.